Consider the following 496-residue polypeptide: Probable cytosol aminopeptidase (496 aa).

Residues K268 and D273 each contribute to the Mn(2+) site. Residue K280 is part of the active site. The Mn(2+) site is built by D291, D350, and E352. The active site involves R354.

The protein belongs to the peptidase M17 family. The cofactor is Mn(2+).

It localises to the cytoplasm. The catalysed reaction is Release of an N-terminal amino acid, Xaa-|-Yaa-, in which Xaa is preferably Leu, but may be other amino acids including Pro although not Arg or Lys, and Yaa may be Pro. Amino acid amides and methyl esters are also readily hydrolyzed, but rates on arylamides are exceedingly low.. The enzyme catalyses Release of an N-terminal amino acid, preferentially leucine, but not glutamic or aspartic acids.. Its function is as follows. Presumably involved in the processing and regular turnover of intracellular proteins. Catalyzes the removal of unsubstituted N-terminal amino acids from various peptides. The protein is Probable cytosol aminopeptidase of Thioalkalivibrio sulfidiphilus (strain HL-EbGR7).